Consider the following 132-residue polypeptide: Small ribosomal subunit protein uS8 (132 aa).

It belongs to the universal ribosomal protein uS8 family. In terms of assembly, part of the 30S ribosomal subunit. Contacts proteins S5 and S12.

In terms of biological role, one of the primary rRNA binding proteins, it binds directly to 16S rRNA central domain where it helps coordinate assembly of the platform of the 30S subunit. The polypeptide is Small ribosomal subunit protein uS8 (Caulobacter sp. (strain K31)).